A 466-amino-acid polypeptide reads, in one-letter code: Putative D-3-phosphoglycerate dehydrogenase (466 aa).

Residues Met1 to Leu15 are compositionally biased toward basic and acidic residues. A disordered region spans residues Met1 to Asn26. The span at Asn16–Asn26 shows a compositional bias: polar residues. A Phosphoserine modification is found at Ser87. NAD(+) is bound by residues His205–Ile206 and Asp225. Ser258 carries the post-translational modification Phosphoserine. NAD(+) is bound by residues Ala282–Arg284 and Asp308. Arg284 is an active-site residue. Glu313 is a catalytic residue. The Proton donor role is filled by His344. His344–Gly347 lines the NAD(+) pocket. The ACT domain occupies Arg396–Tyr466.

Belongs to the D-isomer specific 2-hydroxyacid dehydrogenase family.

The enzyme catalyses (2R)-3-phosphoglycerate + NAD(+) = 3-phosphooxypyruvate + NADH + H(+). It catalyses the reaction (R)-2-hydroxyglutarate + NAD(+) = 2-oxoglutarate + NADH + H(+). The protein operates within amino-acid biosynthesis; L-serine biosynthesis; L-serine from 3-phospho-D-glycerate: step 1/3. In terms of biological role, catalyzes the reversible oxidation of 3-phospho-D-glycerate to 3-phosphonooxypyruvate, the first step of the phosphorylated L-serine biosynthesis pathway. Also catalyzes the reversible oxidation of 2-hydroxyglutarate to 2-oxoglutarate. In Schizosaccharomyces pombe (strain 972 / ATCC 24843) (Fission yeast), this protein is Putative D-3-phosphoglycerate dehydrogenase.